Here is a 757-residue protein sequence, read N- to C-terminus: Cartilage oligomeric matrix protein (757 aa).

Positions 1–20 (MVPDTACVLLLTLAALGASG) are cleaved as a signal peptide. The tract at residues 22–86 (GQSPLGSDLG…SVRTGLPSVR (65 aa)) is COMP N-terminal. Residues 87–126 (PLLHCAPGFCFPGVACIQTESGARCGPCPAGFTGNGSHCT) form the EGF-like 1 domain. 21 cysteine pairs are disulfide-bonded: C91/C102, C96/C111, C114/C125, C131/C142, C136/C151, C154/C178, C184/C197, C191/C206, C209/C221, C229/C243, C237/C253, C255/C266, C282/C287, C292/C312, C328/C348, C351/C371, C387/C407, C410/C430, C448/C468, C484/C504, and C520/C741. Residue N121 is glycosylated (N-linked (GlcNAc...) asparagine). The region spanning 127-179 (DVNECNAHPCFPRVRCINTSPGFRCEACPPGYSGPTHQGVGLAFAKANKQVCT) is the EGF-like 2; calcium-binding domain. The EGF-like 3; calcium-binding domain maps to 180-222 (DINECETGQHNCVPNSVCINTRGSFQCGPCQPGFVGDQASGCQ). Residues 225 to 267 (AQRFCPDGSPSECHEHADCVLERDGSRSCVCAVGWAGNGILCG) enclose the EGF-like 4 domain. TSP type-3 repeat units lie at residues 268–300 (RDTD…NSGQ), 301–336 (EDVD…NPDQ), 337–359 (RNTD…NDDQ), 360–395 (KDTD…NSDQ), 396–418 (KDSD…NPDQ), 419–456 (ADVD…NSAQ), 457–492 (EDSD…NPGQ), and 493–528 (EDAD…EVTL). The disordered stretch occupies residues 298–503 (SGQEDVDRDG…DADRDGVGDV (206 aa)). Composition is skewed to basic and acidic residues over residues 334 to 346 (PDQR…KWGD) and 352 to 370 (RSQK…RGDA). The short motif at 367 to 369 (RGD) is the Cell attachment site element. The segment covering 467–476 (ACDDDDDNDG) has biased composition (acidic residues). The tract at residues 527–757 (TLTDFRAFQT…DYETHQLRQA (231 aa)) is mediates cell survival and induction of the IAP family of survival proteins. The 215-residue stretch at 532 to 746 (RAFQTVVLDP…LRYRCNDTIP (215 aa)) folds into the TSP C-terminal domain. N-linked (GlcNAc...) asparagine glycosylation occurs at N742.

It belongs to the thrombospondin family. Pentamer; disulfide-linked. Exists in a more compact conformation in the presence of calcium and shows a more extended conformation in the absence of calcium. Interacts with ITGB3, ITGA5 and FN1. Binding to FN1 requires the presence of divalent cations (Ca(2+), Mg(2+) or Mn(2+)). The greatest amount of binding is seen in the presence of Mn(2+). Interacts with MATN1, MATN3, MATN4 and ACAN. Binds heparin, heparan sulfate and chondroitin sulfate. EDTA dimishes significantly its binding to ACAN and abolishes its binding to MATN3, MATN4 and chondroitin sulfate. Interacts with collagen I, II and IX, and interaction with these collagens is dependent on the presence of zinc ions. Interacts with ADAMTS12. Interacts with ITGA7. Requires Ca(2+) as cofactor. In terms of processing, proteolytically cleaved by metalloproteases ADAMTS4 and ADAMTS1 with ADAMTS4 showing more potent activity. In terms of tissue distribution, abundantly expressed in the chondrocyte extracellular matrix, and is also found in bone, tendon, ligament and synovium and blood vessels. Increased amounts are produced during late stages of osteoarthritis in the area adjacent to the main defect.

It is found in the secreted. The protein localises to the extracellular space. Its subcellular location is the extracellular matrix. In terms of biological role, plays a role in the structural integrity of cartilage via its interaction with other extracellular matrix proteins such as the collagens and fibronectin. Can mediate the interaction of chondrocytes with the cartilage extracellular matrix through interaction with cell surface integrin receptors. Could play a role in the pathogenesis of osteoarthritis. Potent suppressor of apoptosis in both primary chondrocytes and transformed cells. Suppresses apoptosis by blocking the activation of caspase-3 and by inducing the IAP family of survival proteins (BIRC3, BIRC2, BIRC5 and XIAP). Essential for maintaining a vascular smooth muscle cells (VSMCs) contractile/differentiated phenotype under physiological and pathological stimuli. Maintains this phenotype of VSMCs by interacting with ITGA7. This chain is Cartilage oligomeric matrix protein, found in Homo sapiens (Human).